The following is a 130-amino-acid chain: Small ribosomal subunit protein uS9 (130 aa).

This sequence belongs to the universal ribosomal protein uS9 family.

This chain is Small ribosomal subunit protein uS9, found in Shewanella pealeana (strain ATCC 700345 / ANG-SQ1).